Here is a 678-residue protein sequence, read N- to C-terminus: MFFISRSDTDQATTILYIKMEFKKWHDHECDKGVVVRNLIVGTKVYARKDDGKIPPRDLLSTIGRTKTFICGTCGMRIMDMEDEMSMYDMSMRINTVLKAYADVYKGEGMAMVQKFRDQGKYFMSYYIMTMNNQDVANKTKPSIVLSPNKQHFIPDPKWDQNVALTSKWWEDDKCDYDNQYSIMEHTSSVIESLIAYGGGTMEERMKSSKAATDRGTYIHENYGKMILANAVSVFPGYENFQTVLPGRIIWNNFSLIGCTPDGLTVPSESTFHEYLEKIWEHNPKDPVPDSLMRLARKGAPHIIHEIKSLQKACARVREDWVDSKFYTFQRVGGENEEFKRDVVNYIAKLFIAAGYMQKDEISRSKYAQIEGEKVEQYTCTDPEGKYYDTGKSKPSAFTRTCKIALTDAIDYKSINLISGQVVKQLADHPLYNEEIDEKTGKKKPSKKCTVKREGGFYPCRKVLNKVGKCKIIFYRRHPVTKEPIKSFDLDFDESPFRLTVNGDHFIQTMTQMATCTWLNKNMKHMYTSVLSFFDGTAAPAVQISWEQNMTLDLIDDYMYHTCKRVREVCPKTWAQVFRKAEFTGVPLCLRPDISVDIDSYIPPKVGMENIEEMDAKESEDMFNSMMKCFGMTEDTTADKPIKKRKRVTFEDDIIEVKKLTKIHRGRQATHEISDEED.

This is an uncharacterized protein from Ostreid herpesvirus 1 (isolate France) (OsHV-1).